A 392-amino-acid polypeptide reads, in one-letter code: Formate-dependent phosphoribosylglycinamide formyltransferase (392 aa).

Residues 15-16 (EL) and Glu75 contribute to the N(1)-(5-phospho-beta-D-ribosyl)glycinamide site. ATP is bound by residues Arg107, Lys148, 153 to 158 (SSGKGQ), 188 to 191 (EEFL), and Glu196. Residues 112-302 (DLASEELALL…EFELHLRAVL (191 aa)) enclose the ATP-grasp domain. Mg(2+) contacts are provided by Glu261 and Glu273. N(1)-(5-phospho-beta-D-ribosyl)glycinamide contacts are provided by residues Asp280, Lys350, and 357–358 (RR).

It belongs to the PurK/PurT family. Homodimer.

It carries out the reaction N(1)-(5-phospho-beta-D-ribosyl)glycinamide + formate + ATP = N(2)-formyl-N(1)-(5-phospho-beta-D-ribosyl)glycinamide + ADP + phosphate + H(+). The protein operates within purine metabolism; IMP biosynthesis via de novo pathway; N(2)-formyl-N(1)-(5-phospho-D-ribosyl)glycinamide from N(1)-(5-phospho-D-ribosyl)glycinamide (formate route): step 1/1. In terms of biological role, involved in the de novo purine biosynthesis. Catalyzes the transfer of formate to 5-phospho-ribosyl-glycinamide (GAR), producing 5-phospho-ribosyl-N-formylglycinamide (FGAR). Formate is provided by PurU via hydrolysis of 10-formyl-tetrahydrofolate. The protein is Formate-dependent phosphoribosylglycinamide formyltransferase of Prochlorococcus marinus (strain MIT 9303).